We begin with the raw amino-acid sequence, 232 residues long: Ribonuclease 3 (232 aa).

The 126-residue stretch at Ala10–Gly135 folds into the RNase III domain. A Mg(2+)-binding site is contributed by Glu48. Residue Asp52 is part of the active site. Positions 121 and 124 each coordinate Mg(2+). The active site involves Glu124. A DRBM domain is found at Asp161–Glu230.

It belongs to the ribonuclease III family. Homodimer. It depends on Mg(2+) as a cofactor.

Its subcellular location is the cytoplasm. The catalysed reaction is Endonucleolytic cleavage to 5'-phosphomonoester.. Functionally, digests double-stranded RNA. Involved in the processing of primary rRNA transcript to yield the immediate precursors to the large and small rRNAs (23S and 16S). Processes some mRNAs, and tRNAs when they are encoded in the rRNA operon. Processes pre-crRNA and tracrRNA of type II CRISPR loci if present in the organism. This is Ribonuclease 3 from Anaplasma marginale (strain St. Maries).